The chain runs to 514 residues: Maturase K (514 aa).

Belongs to the intron maturase 2 family. MatK subfamily.

Its subcellular location is the plastid. It localises to the chloroplast. Its function is as follows. Usually encoded in the trnK tRNA gene intron. Probably assists in splicing its own and other chloroplast group II introns. The polypeptide is Maturase K (Phoenix dactylifera (Date palm)).